The chain runs to 246 residues: Ribonuclease 3 (246 aa).

Residues 18 to 147 (FQELQNKIGI…FIGALYLDQG (130 aa)) enclose the RNase III domain. Glutamate 60 is a Mg(2+) binding site. Aspartate 64 is a catalytic residue. Mg(2+)-binding residues include aspartate 133 and glutamate 136. Glutamate 136 is an active-site residue. The DRBM domain occupies 173–242 (DFKSQLQELV…AQMALETLRA (70 aa)).

It belongs to the ribonuclease III family. In terms of assembly, homodimer. It depends on Mg(2+) as a cofactor.

Its subcellular location is the cytoplasm. The enzyme catalyses Endonucleolytic cleavage to 5'-phosphomonoester.. In terms of biological role, digests double-stranded RNA. Involved in the processing of primary rRNA transcript to yield the immediate precursors to the large and small rRNAs (23S and 16S). Processes some mRNAs, and tRNAs when they are encoded in the rRNA operon. Processes pre-crRNA and tracrRNA of type II CRISPR loci if present in the organism. The sequence is that of Ribonuclease 3 from Geobacillus kaustophilus (strain HTA426).